The chain runs to 383 residues: S-adenosylmethionine synthase (383 aa).

Residue His15 participates in ATP binding. Asp17 provides a ligand contact to Mg(2+). Position 43 (Glu43) interacts with K(+). 2 residues coordinate L-methionine: Glu56 and Gln99. The segment at 99–109 (QSPDINQGVDR) is flexible loop. ATP is bound by residues 164 to 166 (DAK), 230 to 231 (RF), Asp239, 245 to 246 (RK), Ala262, and Lys266. Residue Asp239 coordinates L-methionine. Lys270 contributes to the L-methionine binding site.

It belongs to the AdoMet synthase family. As to quaternary structure, homotetramer; dimer of dimers. Mg(2+) serves as cofactor. The cofactor is K(+).

The protein localises to the cytoplasm. The enzyme catalyses L-methionine + ATP + H2O = S-adenosyl-L-methionine + phosphate + diphosphate. Its pathway is amino-acid biosynthesis; S-adenosyl-L-methionine biosynthesis; S-adenosyl-L-methionine from L-methionine: step 1/1. In terms of biological role, catalyzes the formation of S-adenosylmethionine (AdoMet) from methionine and ATP. The overall synthetic reaction is composed of two sequential steps, AdoMet formation and the subsequent tripolyphosphate hydrolysis which occurs prior to release of AdoMet from the enzyme. The chain is S-adenosylmethionine synthase from Actinobacillus pleuropneumoniae serotype 7 (strain AP76).